The sequence spans 373 residues: Indole glucosinolate O-methyltransferase 4 (373 aa).

Positions 217, 240, 260, 261, and 274 each coordinate S-adenosyl-L-homocysteine. The active-site Proton acceptor is the His278.

Belongs to the class I-like SAM-binding methyltransferase superfamily. Cation-independent O-methyltransferase family. Interacts with B'GAMMA.

Its pathway is secondary metabolite biosynthesis. Functionally, involved in indole glucosinolate biosynthesis. Catalyzes methoxylation reactions of the glucosinolate indole ring. Converts the hydroxy intermediates 4-hydroxy-indol-3-yl-methylglucosinolate (4OH-I3M) and 1-hydroxy-indol-3-yl-methylglucosinolate (1OH-I3M) to 4-methoxy-indol-3-yl-methylglucosinolate (4MO-I3M) and 1-methoxy-indol-3-yl-methylglucosinolate(1MO-I3M), respectively. The protein is Indole glucosinolate O-methyltransferase 4 of Arabidopsis thaliana (Mouse-ear cress).